Here is a 138-residue protein sequence, read N- to C-terminus: MHEWALADGIVRTAIEFARQHGKEKVLAMRISLGELQDVNQEILEFAINEIKKGTIAEEAELEFIIEEAEFKCRNCGNEWKLKDVKESFNETIKEDIHFIPEVVHAFLACPNCGSRDFEVTKGRGVYLAAIKVEGDDE.

Histidine 2 contributes to the Ni(2+) binding site. Residues cysteine 73, cysteine 76, cysteine 110, and cysteine 113 each contribute to the Zn(2+) site.

This sequence belongs to the HypA/HybF family.

Functionally, involved in the maturation of [NiFe] hydrogenases. Required for nickel insertion into the metal center of the hydrogenase. The sequence is that of Hydrogenase maturation factor HypA from Thermococcus sibiricus (strain DSM 12597 / MM 739).